We begin with the raw amino-acid sequence, 364 residues long: Alanine racemase (364 aa).

Lys-35 (proton acceptor; specific for D-alanine) is an active-site residue. N6-(pyridoxal phosphate)lysine is present on Lys-35. A substrate-binding site is contributed by Arg-132. Tyr-260 (proton acceptor; specific for L-alanine) is an active-site residue. Position 308 (Met-308) interacts with substrate.

Belongs to the alanine racemase family. Pyridoxal 5'-phosphate is required as a cofactor.

It catalyses the reaction L-alanine = D-alanine. It participates in amino-acid biosynthesis; D-alanine biosynthesis; D-alanine from L-alanine: step 1/1. Functionally, catalyzes the interconversion of L-alanine and D-alanine. May also act on other amino acids. The sequence is that of Alanine racemase (alr) from Acidithiobacillus ferrooxidans (strain ATCC 23270 / DSM 14882 / CIP 104768 / NCIMB 8455) (Ferrobacillus ferrooxidans (strain ATCC 23270)).